The primary structure comprises 272 residues: Type III pantothenate kinase (272 aa).

Residue 6-13 (NVNNTNTL) coordinates ATP. Substrate is bound at residue 113–116 (GADR). The active-site Proton acceptor is the D115. A K(+)-binding site is contributed by D135. An ATP-binding site is contributed by T138. T190 provides a ligand contact to substrate.

It belongs to the type III pantothenate kinase family. Homodimer. NH4(+) is required as a cofactor. Requires K(+) as cofactor.

It is found in the cytoplasm. It carries out the reaction (R)-pantothenate + ATP = (R)-4'-phosphopantothenate + ADP + H(+). It participates in cofactor biosynthesis; coenzyme A biosynthesis; CoA from (R)-pantothenate: step 1/5. In terms of biological role, catalyzes the phosphorylation of pantothenate (Pan), the first step in CoA biosynthesis. The sequence is that of Type III pantothenate kinase from Acidobacterium capsulatum (strain ATCC 51196 / DSM 11244 / BCRC 80197 / JCM 7670 / NBRC 15755 / NCIMB 13165 / 161).